A 351-amino-acid polypeptide reads, in one-letter code: Cobalt-precorrin-5B C(1)-methyltransferase (351 aa).

It belongs to the CbiD family.

It catalyses the reaction Co-precorrin-5B + S-adenosyl-L-methionine = Co-precorrin-6A + S-adenosyl-L-homocysteine. It functions in the pathway cofactor biosynthesis; adenosylcobalamin biosynthesis; cob(II)yrinate a,c-diamide from sirohydrochlorin (anaerobic route): step 6/10. Functionally, catalyzes the methylation of C-1 in cobalt-precorrin-5B to form cobalt-precorrin-6A. This chain is Cobalt-precorrin-5B C(1)-methyltransferase, found in Thermosipho africanus (strain TCF52B).